The sequence spans 78 residues: WAP four-disulfide core domain protein 12 (78 aa).

The signal sequence occupies residues 1-21; sequence MWPNSILVLTVLLISSTLVTG. The region spanning 25–72 is the WAP domain; the sequence is KGAEKGVCPPDNVRCIRGEDPQCHNDNDCKDQKICCYWHCGFKCVQPV. Cystine bridges form between cysteine 32-cysteine 60, cysteine 39-cysteine 64, cysteine 47-cysteine 59, and cysteine 53-cysteine 68.

It is found in the secreted. Its function is as follows. Antibacterial protein. Putative acid-stable proteinase inhibitor. The chain is WAP four-disulfide core domain protein 12 from Rattus norvegicus (Rat).